The sequence spans 542 residues: Glucose-6-phosphate isomerase (542 aa).

The active-site Proton donor is the Glu353. Active-site residues include His384 and Lys508.

The protein belongs to the GPI family.

The protein localises to the cytoplasm. It catalyses the reaction alpha-D-glucose 6-phosphate = beta-D-fructose 6-phosphate. It functions in the pathway carbohydrate biosynthesis; gluconeogenesis. It participates in carbohydrate degradation; glycolysis; D-glyceraldehyde 3-phosphate and glycerone phosphate from D-glucose: step 2/4. Functionally, catalyzes the reversible isomerization of glucose-6-phosphate to fructose-6-phosphate. In Corynebacterium efficiens (strain DSM 44549 / YS-314 / AJ 12310 / JCM 11189 / NBRC 100395), this protein is Glucose-6-phosphate isomerase.